The chain runs to 410 residues: WD repeat and FYVE domain-containing protein 1 (410 aa).

WD repeat units follow at residues Gly22 to Pro61, Thr66 to Asn105, Ala112 to Gly150, Phe153 to Ile192, Gly197 to Leu236, and Gly240 to Pro279. Residues Trp281–Lys352 form an FYVE-type zinc finger. Residues Cys287, Cys290, Cys314, Cys317, Cys322, Cys325, Cys344, and Cys347 each contribute to the Zn(2+) site. The stretch at Glu364–Leu403 is one WD 7 repeat. Residue Ser408 is modified to Phosphoserine.

Binds PtdIns3P in vitro with high specificity over other phosphoinositides. Interacts (via WD repeat 2) with tyrosine-phosphorylated TLR3 (via TIR domain) in response to poly(I:C). Interacts with TLR4 in response to LPS. Interacts with TICAM1 in response to poly(I:C).

It is found in the early endosome. Its function is as follows. Positively regulates TLR3- and TLR4-mediated signaling pathways by bridging the interaction between TLR3 or TLR4 and TICAM1. Promotes TLR3/4 ligand-induced activation of transcription factors IRF3 and NF-kappa-B, as well as the production of IFN-beta and inflammatory cytokines. This chain is WD repeat and FYVE domain-containing protein 1 (WDFY1), found in Bos taurus (Bovine).